The primary structure comprises 260 residues: Cytosolic Fe-S cluster assembly factor Nubp2 homolog (260 aa).

An ATP-binding site is contributed by 14–21 (GKGGVGKS). [4Fe-4S] cluster contacts are provided by Cys188 and Cys191.

This sequence belongs to the Mrp/NBP35 ATP-binding proteins family. NUBP2/CFD1 subfamily. As to quaternary structure, heterotetramer of 2 Nubp1 and 2 Nubp2 chains. It depends on [4Fe-4S] cluster as a cofactor.

It localises to the cytoplasm. In terms of biological role, component of the cytosolic iron-sulfur (Fe/S) protein assembly (CIA) machinery. Required for maturation of extramitochondrial Fe-S proteins. The Nubp1-Nubp2 heterotetramer forms a Fe-S scaffold complex, mediating the de novo assembly of an Fe-S cluster and its transfer to target apoproteins. The protein is Cytosolic Fe-S cluster assembly factor Nubp2 homolog of Drosophila sechellia (Fruit fly).